The sequence spans 141 residues: Hemoglobin subunit alpha-A (141 aa).

A Globin domain is found at 1–141 (VLSAADKANV…VGAVLTAKYR (141 aa)). His-58 serves as a coordination point for O2. Residue His-87 participates in heme b binding.

It belongs to the globin family. In terms of assembly, heterotetramer of two alpha chains and two beta chains. In terms of tissue distribution, red blood cells.

Functionally, involved in oxygen transport from the lung to the various peripheral tissues. The chain is Hemoglobin subunit alpha-A (HBAA) from Chloephaga melanoptera (Andean goose).